The chain runs to 329 residues: GTP 3',8-cyclase (329 aa).

The Radical SAM core domain maps to 8-234 (AFARKFYYLR…QLRSRADGPA (227 aa)). R17 contacts GTP. [4Fe-4S] cluster is bound by residues C24 and C28. Y30 is a binding site for S-adenosyl-L-methionine. Residue C31 participates in [4Fe-4S] cluster binding. Residue R68 participates in GTP binding. Residue G72 participates in S-adenosyl-L-methionine binding. GTP is bound at residue T99. S123 is a binding site for S-adenosyl-L-methionine. K160 provides a ligand contact to GTP. Residue M194 coordinates S-adenosyl-L-methionine. C257 and C260 together coordinate [4Fe-4S] cluster. Position 262–264 (262–264 (RLR)) interacts with GTP. C274 provides a ligand contact to [4Fe-4S] cluster.

It belongs to the radical SAM superfamily. MoaA family. In terms of assembly, monomer and homodimer. Requires [4Fe-4S] cluster as cofactor.

It catalyses the reaction GTP + AH2 + S-adenosyl-L-methionine = (8S)-3',8-cyclo-7,8-dihydroguanosine 5'-triphosphate + 5'-deoxyadenosine + L-methionine + A + H(+). The protein operates within cofactor biosynthesis; molybdopterin biosynthesis. Its function is as follows. Catalyzes the cyclization of GTP to (8S)-3',8-cyclo-7,8-dihydroguanosine 5'-triphosphate. The chain is GTP 3',8-cyclase from Cronobacter sakazakii (strain ATCC BAA-894) (Enterobacter sakazakii).